A 149-amino-acid chain; its full sequence is Oligosaccharyltransferase complex subunit ostc-A (149 aa).

At 1–32 (MESLYRVPFTVLECPNLKLKKPSWLHMPSAMT) the chain is on the cytoplasmic side. A helical membrane pass occupies residues 33-53 (VYAMVVVSYFLITGGIIYDVI). Over 54 to 83 (VEPPSVGSMTDEHGHQRPVAFLAYRVNGQY) the chain is Extracellular. A helical membrane pass occupies residues 84–104 (IMEGLASSFLFTMGGLGFIIL). Topologically, residues 105-117 (DRSNTPNIPKLNR) are cytoplasmic. The chain crosses the membrane as a helical span at residues 118–138 (FLLLFIGFVCVLLSFFMARVF). Topologically, residues 139–149 (MRMKLPGYLMG) are extracellular.

This sequence belongs to the OSTC family. In terms of assembly, specific component of the STT3A-containing form of the oligosaccharyltransferase (OST) complex.

It localises to the membrane. It participates in protein modification; protein glycosylation. Specific component of the STT3A-containing form of the oligosaccharyl transferase (OST) complex that catalyzes the initial transfer of a defined glycan (Glc(3)Man(9)GlcNAc(2) in eukaryotes) from the lipid carrier dolichol-pyrophosphate to an asparagine residue within an Asn-X-Ser/Thr consensus motif in nascent polypeptide chains, the first step in protein N-glycosylation. N-glycosylation occurs cotranslationally and the complex associates with the Sec61 complex at the channel-forming translocon complex that mediates protein translocation across the endoplasmic reticulum (ER). All subunits are required for a maximal enzyme activity. The sequence is that of Oligosaccharyltransferase complex subunit ostc-A from Xenopus laevis (African clawed frog).